We begin with the raw amino-acid sequence, 137 residues long: Small ribosomal subunit protein bS6 (137 aa).

A disordered region spans residues 96-137; it reads ITEASPMAKAKDERDTRRSSEERAPRAEATEEVKESAENTAE. The segment covering 104-137 has biased composition (basic and acidic residues); that stretch reads KAKDERDTRRSSEERAPRAEATEEVKESAENTAE.

This sequence belongs to the bacterial ribosomal protein bS6 family.

In terms of biological role, binds together with bS18 to 16S ribosomal RNA. This Shewanella piezotolerans (strain WP3 / JCM 13877) protein is Small ribosomal subunit protein bS6.